Here is a 216-residue protein sequence, read N- to C-terminus: Pyridoxine/pyridoxamine 5'-phosphate oxidase (216 aa).

Substrate is bound by residues 12–15 (RKSY) and Lys70. FMN is bound by residues 65 to 70 (RVVLVK), 80 to 81 (FT), Arg86, and Lys87. The substrate site is built by Tyr127, Arg131, and Ser135. Residues 144 to 145 (QS) and Trp188 contribute to the FMN site. 194–196 (RLH) lines the substrate pocket. Position 198 (Arg198) interacts with FMN.

The protein belongs to the pyridoxamine 5'-phosphate oxidase family. In terms of assembly, homodimer. FMN is required as a cofactor.

It catalyses the reaction pyridoxamine 5'-phosphate + O2 + H2O = pyridoxal 5'-phosphate + H2O2 + NH4(+). The enzyme catalyses pyridoxine 5'-phosphate + O2 = pyridoxal 5'-phosphate + H2O2. It functions in the pathway cofactor metabolism; pyridoxal 5'-phosphate salvage; pyridoxal 5'-phosphate from pyridoxamine 5'-phosphate: step 1/1. The protein operates within cofactor metabolism; pyridoxal 5'-phosphate salvage; pyridoxal 5'-phosphate from pyridoxine 5'-phosphate: step 1/1. Catalyzes the oxidation of either pyridoxine 5'-phosphate (PNP) or pyridoxamine 5'-phosphate (PMP) into pyridoxal 5'-phosphate (PLP). The sequence is that of Pyridoxine/pyridoxamine 5'-phosphate oxidase from Polaromonas sp. (strain JS666 / ATCC BAA-500).